Reading from the N-terminus, the 353-residue chain is Quinolinate synthase (353 aa).

Iminosuccinate contacts are provided by histidine 47 and serine 68. [4Fe-4S] cluster is bound at residue cysteine 113. Iminosuccinate-binding positions include 139-141 (YAN) and serine 156. A [4Fe-4S] cluster-binding site is contributed by cysteine 200. Iminosuccinate-binding positions include 226 to 228 (HPE) and threonine 243. A [4Fe-4S] cluster-binding site is contributed by cysteine 297.

The protein belongs to the quinolinate synthase family. Type 1 subfamily. The cofactor is [4Fe-4S] cluster.

The protein resides in the cytoplasm. The catalysed reaction is iminosuccinate + dihydroxyacetone phosphate = quinolinate + phosphate + 2 H2O + H(+). Its pathway is cofactor biosynthesis; NAD(+) biosynthesis; quinolinate from iminoaspartate: step 1/1. Functionally, catalyzes the condensation of iminoaspartate with dihydroxyacetone phosphate to form quinolinate. This chain is Quinolinate synthase, found in Erwinia tasmaniensis (strain DSM 17950 / CFBP 7177 / CIP 109463 / NCPPB 4357 / Et1/99).